We begin with the raw amino-acid sequence, 341 residues long: Tyrosine recombinase XerC (341 aa).

Positions 14-105 constitute a Core-binding (CB) domain; sequence PDAAEALERW…GVRSFFRWAD (92 aa). The 184-residue stretch at 126–309 folds into the Tyr recombinase domain; it reads PLPRPLAADD…DAEHLLSVYE (184 aa). Catalysis depends on residues arginine 169, lysine 193, histidine 261, arginine 264, and histidine 287. The active-site O-(3'-phospho-DNA)-tyrosine intermediate is tyrosine 296.

It belongs to the 'phage' integrase family. XerC subfamily. As to quaternary structure, forms a cyclic heterotetrameric complex composed of two molecules of XerC and two molecules of XerD.

The protein localises to the cytoplasm. Site-specific tyrosine recombinase, which acts by catalyzing the cutting and rejoining of the recombining DNA molecules. The XerC-XerD complex is essential to convert dimers of the bacterial chromosome into monomers to permit their segregation at cell division. It also contributes to the segregational stability of plasmids. This chain is Tyrosine recombinase XerC, found in Rhodospirillum centenum (strain ATCC 51521 / SW).